The sequence spans 621 residues: E3 SUMO-protein ligase PIAS2 (621 aa).

The SAP domain maps to V11–L45. Residues L19–L23 carry the LXXLL motif motif. Residues K46 and K249 each participate in a glycyl lysine isopeptide (Lys-Gly) (interchain with G-Cter in SUMO2) cross-link. In terms of domain architecture, PINIT spans Q134–L299. The SP-RING-type zinc-finger motif lies at P331–D412. Zn(2+) contacts are provided by C362, H364, C385, and C388. Residues K430, K435, K443, and K452 each participate in a glycyl lysine isopeptide (Lys-Gly) (interchain with G-Cter in SUMO2) cross-link. Residues V467–T473 are SUMO1-binding. Phosphoserine is present on residues S476, S477, and S478. Residues P484–F492 carry the Nuclear localization signal motif. A Glycyl lysine isopeptide (Lys-Gly) (interchain with G-Cter in SUMO2) cross-link involves residue K489. S499 carries the phosphoserine modification. Residues K502 and Q562 each participate in a glycyl lysine isopeptide (Lys-Gly) (interchain with G-Cter in SUMO2) cross-link. The segment covering S579 to S610 has biased composition (low complexity). Positions S579–D621 are disordered.

It belongs to the PIAS family. As to quaternary structure, binds SUMO1 and UBE2I. Interacts with AXIN1, JUN, MDM2, PARK7, TP53 and TP73 isoform alpha, but not TP73 isoform beta. Interacts with STAT4 following IL12 and IFN-alpha stimulation of T-cells. Interacts also with GTF2I, GTF2IRD1, IKFZ1, DAB2 and MSX2, as well as with several steroid receptors, including ESR1, ESR2, NR3C1, PGR, AR, and with NCOA2. Sumoylation of a target protein seems to enhance the interaction. Binds to sumoylated ELK1. Binds DNA, such as CDKN1A promoter, in a sequence-specific manner. Interacts with PLAG1. Interacts with KLF8; the interaction results in SUMO ligation and repression of KLF8 transcriptional activity and of its cell cycle progression into G(1) phase. PIAS2-beta interacts with IFIH1/MDA5. Isoform PIAS2-alpha interacts with PML (isoform PML-12). Interacts with PRDM1/Blimp-1. Post-translationally, sumoylated. As to expression, mainly expressed in testis. Isoform 3 is expressed predominantly in adult testis, weakly in pancreas, embryonic testis and sperm, and at very low levels in other organs.

The protein resides in the nucleus speckle. It localises to the nucleus. Its subcellular location is the PML body. Its pathway is protein modification; protein sumoylation. In terms of biological role, functions as an E3-type small ubiquitin-like modifier (SUMO) ligase, stabilizing the interaction between UBE2I and the substrate, and as a SUMO-tethering factor. Plays a crucial role as a transcriptional coregulator in various cellular pathways, including the STAT pathway, the p53 pathway and the steroid hormone signaling pathway. The effects of this transcriptional coregulation, transactivation or silencing may vary depending upon the biological context and the PIAS2 isoform studied. However, it seems to be mostly involved in gene silencing. Binds to sumoylated ELK1 and enhances its transcriptional activity by preventing recruitment of HDAC2 by ELK1, thus reversing SUMO-mediated repression of ELK1 transactivation activity. Isoform PIAS2-beta, but not isoform PIAS2-alpha, promotes MDM2 sumoylation. Isoform PIAS2-alpha promotes PARK7 sumoylation. Isoform PIAS2-beta promotes NCOA2 sumoylation more efficiently than isoform PIAS2-alpha. Isoform PIAS2-alpha sumoylates PML at'Lys-65' and 'Lys-160'. The sequence is that of E3 SUMO-protein ligase PIAS2 (PIAS2) from Homo sapiens (Human).